The primary structure comprises 98 residues: NADH-ubiquinone oxidoreductase chain 4L (98 aa).

The next 3 helical transmembrane spans lie at methionine 1 to methionine 21, leucine 31 to isoleucine 51, and isoleucine 61 to valine 81.

Belongs to the complex I subunit 4L family. Core subunit of respiratory chain NADH dehydrogenase (Complex I) which is composed of 45 different subunits.

The protein localises to the mitochondrion inner membrane. The enzyme catalyses a ubiquinone + NADH + 5 H(+)(in) = a ubiquinol + NAD(+) + 4 H(+)(out). In terms of biological role, core subunit of the mitochondrial membrane respiratory chain NADH dehydrogenase (Complex I) which catalyzes electron transfer from NADH through the respiratory chain, using ubiquinone as an electron acceptor. Part of the enzyme membrane arm which is embedded in the lipid bilayer and involved in proton translocation. The polypeptide is NADH-ubiquinone oxidoreductase chain 4L (MT-ND4L) (Chalinolobus tuberculatus (New Zealand long-tailed bat)).